Here is a 478-residue protein sequence, read N- to C-terminus: Aspartyl/glutamyl-tRNA(Asn/Gln) amidotransferase subunit B (478 aa).

Belongs to the GatB/GatE family. GatB subfamily. In terms of assembly, heterotrimer of A, B and C subunits.

It carries out the reaction L-glutamyl-tRNA(Gln) + L-glutamine + ATP + H2O = L-glutaminyl-tRNA(Gln) + L-glutamate + ADP + phosphate + H(+). It catalyses the reaction L-aspartyl-tRNA(Asn) + L-glutamine + ATP + H2O = L-asparaginyl-tRNA(Asn) + L-glutamate + ADP + phosphate + 2 H(+). Allows the formation of correctly charged Asn-tRNA(Asn) or Gln-tRNA(Gln) through the transamidation of misacylated Asp-tRNA(Asn) or Glu-tRNA(Gln) in organisms which lack either or both of asparaginyl-tRNA or glutaminyl-tRNA synthetases. The reaction takes place in the presence of glutamine and ATP through an activated phospho-Asp-tRNA(Asn) or phospho-Glu-tRNA(Gln). This Lachnoclostridium phytofermentans (strain ATCC 700394 / DSM 18823 / ISDg) (Clostridium phytofermentans) protein is Aspartyl/glutamyl-tRNA(Asn/Gln) amidotransferase subunit B.